The chain runs to 328 residues: Acyl-CoA wax alcohol acyltransferase 1 (328 aa).

Helical transmembrane passes span 12–32 and 34–53; these read SLSL…VQPL and ICLL…VWLL.

It belongs to the diacylglycerol acyltransferase family.

It localises to the endoplasmic reticulum membrane. It catalyses the reaction a long chain fatty alcohol + a fatty acyl-CoA = a wax ester + CoA. It carries out the reaction 1,2-di-(9Z-octadecenoyl)-sn-glycerol + (9Z)-octadecenoyl-CoA = 1,2,3-tri-(9Z-octadecenoyl)-glycerol + CoA. The enzyme catalyses hexadecan-1-ol + (9Z)-octadecenoyl-CoA = hexadecanyl (9Z)-octadecenoate + CoA. The catalysed reaction is decan-1-ol + (9Z)-octadecenoyl-CoA = 1-O-decyl-(9Z)-octadecenoate + CoA. It catalyses the reaction (9Z)-hexadecen-1-ol + (9Z)-octadecenoyl-CoA = 1-O-(9Z)-hexadecenyl (9Z)-octadecenoate + CoA. It carries out the reaction octadecan-1-ol + (9Z)-octadecenoyl-CoA = 1-O-octadecyl (9Z)-octadecenoate + CoA. The enzyme catalyses (9Z)-octadecen-1-ol + (9Z)-octadecenoyl-CoA = 1-O-(9Z)-octadecenyl (9Z)-octadecenoate + CoA. The catalysed reaction is hexadecan-1-ol + hexadecanoyl-CoA = hexadecanyl hexadecanoate + CoA. It catalyses the reaction hexadecan-1-ol + (9Z)-hexadecenoyl-CoA = 1-O-hexadecyl (9Z)-hexadecenoate + CoA. It carries out the reaction hexadecan-1-ol + octadecanoyl-CoA = hexadecanyl octadecanoate + CoA. The enzyme catalyses eicosan-1-ol + (9Z)-octadecenoyl-CoA = 1-O-eicosanyl (9Z)-octadecenoate + CoA. In terms of biological role, acyltransferase that catalyzes the formation of ester bonds between fatty alcohols and fatty acyl-CoAs to form wax monoesters. Shows a strong preference for decyl alcohol (C10), with less activity towards C16 and C18 alcohols. Shows a strong preference for saturated acyl-CoAs. The chain is Acyl-CoA wax alcohol acyltransferase 1 (Awat1) from Mus musculus (Mouse).